The sequence spans 187 residues: UPF0301 protein Noc_0368 (187 aa).

Belongs to the UPF0301 (AlgH) family.

The protein is UPF0301 protein Noc_0368 of Nitrosococcus oceani (strain ATCC 19707 / BCRC 17464 / JCM 30415 / NCIMB 11848 / C-107).